The sequence spans 291 residues: Formamidopyrimidine-DNA glycosylase (291 aa).

P2 serves as the catalytic Schiff-base intermediate with DNA. The active-site Proton donor is the E3. The Proton donor; for beta-elimination activity role is filled by K58. 3 residues coordinate DNA: H104, R127, and R172. An FPG-type zinc finger spans residues 257-291; sequence FVYDRAGLPCRACGTPIRQIVQGQRSTFCCPTCQR. R281 serves as the catalytic Proton donor; for delta-elimination activity.

Belongs to the FPG family. Monomer. Zn(2+) is required as a cofactor.

It catalyses the reaction Hydrolysis of DNA containing ring-opened 7-methylguanine residues, releasing 2,6-diamino-4-hydroxy-5-(N-methyl)formamidopyrimidine.. The enzyme catalyses 2'-deoxyribonucleotide-(2'-deoxyribose 5'-phosphate)-2'-deoxyribonucleotide-DNA = a 3'-end 2'-deoxyribonucleotide-(2,3-dehydro-2,3-deoxyribose 5'-phosphate)-DNA + a 5'-end 5'-phospho-2'-deoxyribonucleoside-DNA + H(+). Functionally, involved in base excision repair of DNA damaged by oxidation or by mutagenic agents. Acts as a DNA glycosylase that recognizes and removes damaged bases. Has a preference for oxidized purines, such as 7,8-dihydro-8-oxoguanine (8-oxoG). Has AP (apurinic/apyrimidinic) lyase activity and introduces nicks in the DNA strand. Cleaves the DNA backbone by beta-delta elimination to generate a single-strand break at the site of the removed base with both 3'- and 5'-phosphates. The sequence is that of Formamidopyrimidine-DNA glycosylase from Ralstonia pickettii (strain 12J).